A 446-amino-acid chain; its full sequence is Na(+)-translocating NADH-quinone reductase subunit A (446 aa).

This sequence belongs to the NqrA family. Composed of six subunits; NqrA, NqrB, NqrC, NqrD, NqrE and NqrF.

The enzyme catalyses a ubiquinone + n Na(+)(in) + NADH + H(+) = a ubiquinol + n Na(+)(out) + NAD(+). NQR complex catalyzes the reduction of ubiquinone-1 to ubiquinol by two successive reactions, coupled with the transport of Na(+) ions from the cytoplasm to the periplasm. NqrA to NqrE are probably involved in the second step, the conversion of ubisemiquinone to ubiquinol. This chain is Na(+)-translocating NADH-quinone reductase subunit A, found in Histophilus somni (strain 2336) (Haemophilus somnus).